Reading from the N-terminus, the 506-residue chain is MTDAENTKPELPKNVRVRFCPSPTGTPHVGMIRTALFNWAEARATGGTLIFRIEDTDAVRDSEESYNQILESLRWLGIDWDEGIDVGGPHGPYRQSERTAIYKDVAAKLLEAGYAYESFSTPEEIKERNLAAGRPAEFGYDGYDRNLTDEQKAAFRAEGRKPALRIKMPDEDIAFDDLIRGTIEFKAGSVPDYVIVRPNGDPLYTLTNPVDDAMMEVNVVLRGEDLLSSTPRQIVLYRYLMELGIAKEMPLFGHMPYVMGQGNKKLSKRDPESNLFNHRDNGFIREGLLNYLALLGWSIAPDRDVFSMDEMTEKFDVRDVKANPARFDIDKAISINAEHIRMLEPEDFLRRSVPYLHRDGVVSADNWDALTDREREVLTAAAPLVQPRVRLLGEVAGMVGSLLSTEGYLEPADDAKKQLKDSAGEVLDKAIAALEAVDEADWKTDNLHETLNKALVEEGGYKPRLAFGPVRVAMSGRRVSPPLFESMEIVGKPVSLARLKGLREHL.

Positions 21–31 match the 'HIGH' region motif; it reads PSPTGTPHVGM. The 'KMSKS' region signature appears at 265–269; it reads KLSKR. Lysine 268 is a binding site for ATP.

It belongs to the class-I aminoacyl-tRNA synthetase family. Glutamate--tRNA ligase type 1 subfamily. As to quaternary structure, monomer.

It is found in the cytoplasm. The catalysed reaction is tRNA(Glu) + L-glutamate + ATP = L-glutamyl-tRNA(Glu) + AMP + diphosphate. In terms of biological role, catalyzes the attachment of glutamate to tRNA(Glu) in a two-step reaction: glutamate is first activated by ATP to form Glu-AMP and then transferred to the acceptor end of tRNA(Glu). This is Glutamate--tRNA ligase from Bifidobacterium longum (strain DJO10A).